Here is a 422-residue protein sequence, read N- to C-terminus: Cytokine receptor-like factor 1 (422 aa).

The signal sequence occupies residues 1–37; it reads MPAGRRGPAAQSARRPPPLLPLLLLLCVLGAPRAGSG. The region spanning 38–131 is the Ig-like C2-type domain; sequence AHTAVISPQD…SILAGSCLYV (94 aa). Residues Asn92, Asn104, and Asn140 are each glycosylated (N-linked (GlcNAc...) asparagine). 2 consecutive Fibronectin type-III domains span residues 137–232 and 237–341; these read KPVN…ILDV and PPPD…TPRS. Cys143 and Cys153 are oxidised to a cystine. A glycan (N-linked (GlcNAc...) asparagine) is linked at Asn168. A disulfide bond links Cys184 and Cys195. Ser219 carries the post-translational modification Phosphoserine. N-linked (GlcNAc...) asparagine glycosylation is present at Asn292. A WSXWS motif motif is present at residues 327-331; it reads WSEWS. A disordered region spans residues 332-363; sequence HPTAASTPRSERPGPGGGACEPRGGEPSSGPV. Residue Asn382 is glycosylated (N-linked (GlcNAc...) asparagine). Residues 399-422 are disordered; the sequence is HKTRNQDEGILPSGRRGTARGPAR.

This sequence belongs to the type I cytokine receptor family. Type 3 subfamily. Forms covalent di- and tetramers. Forms a heteromeric complex with cardiotrophin-like cytokine CLCF1/CLC; the CRLF1-CLCF1 complex is a ligand for the ciliary neurotrophic factor receptor/CNTFR. The CRLF1-CLCF1 heterodimer binds SORL1 (via N-terminal ectodomain); within this complex, the interaction is mediated predominantly by the CRLF1 moiety. The tripartite signaling complex formed by CRLF1, CLCF1 and CNTFR also binds SORL1. In terms of tissue distribution, highest levels of expression observed in spleen, thymus, lymph node, appendix, bone marrow, stomach, placenta, heart, thyroid and ovary. Strongly expressed also in fetal lung.

It is found in the secreted. Functionally, in complex with CLCF1, forms a heterodimeric neurotropic cytokine that plays a crucial role during neuronal development. May also play a regulatory role in the immune system. This is Cytokine receptor-like factor 1 (CRLF1) from Homo sapiens (Human).